Reading from the N-terminus, the 393-residue chain is Na(+)/H(+) antiporter NhaA (393 aa).

A run of 11 helical transmembrane segments spans residues 14–34 (AAGMMLMMATVLAIALANWSV), 60–80 (LLLWINDALMAIFFLLIGLEV), 96–116 (MLPLAAAVGGMVFPALLFLLF), 125–145 (AGWAIPAATDIAFAIGVLTLL), 155–175 (VFLLALAIIDDLGAILIIALF), 179–199 (QVFWPALAGAVLAIAVLAYMN), 218–238 (VCILKCGVHATLAGVIVGFFI), 263–283 (FLIVPLFAFANAGIVLQGIVL), 292–312 (LGIAAGLLLGKPLGITLFSWL), 330–350 (IVAVSVLCGIGFTMSIFITLL), and 362–382 (YAKLGILLASGLAALLGYLAL).

It belongs to the NhaA Na(+)/H(+) (TC 2.A.33) antiporter family.

It localises to the cell inner membrane. It catalyses the reaction Na(+)(in) + 2 H(+)(out) = Na(+)(out) + 2 H(+)(in). Its function is as follows. Na(+)/H(+) antiporter that extrudes sodium in exchange for external protons. The polypeptide is Na(+)/H(+) antiporter NhaA (Pectobacterium atrosepticum (strain SCRI 1043 / ATCC BAA-672) (Erwinia carotovora subsp. atroseptica)).